Consider the following 569-residue polypeptide: Cryptochrome DASH, chloroplastic/mitochondrial (569 aa).

The Photolyase/cryptochrome alpha/beta domain occupies 84 to 221; it reads GVTILWFRND…KLELIWGSTM (138 aa). Residues Tyr316 and 329–333 contribute to the FAD site; that span reads STKFS. Arg436 is an ATP binding site. FAD-binding residues include Asp466 and Asp468. Asp485 serves as a coordination point for ATP. Residues 541–569 form a disordered region; it reads GNGPMAGGSKSGGGFRGSHSGRRSRHNGP. Gly residues predominate over residues 544–556; it reads PMAGGSKSGGGFR. Residues 559 to 569 are compositionally biased toward basic residues; it reads HSGRRSRHNGP.

The protein belongs to the DNA photolyase class-1 family. Homodimer. It depends on FAD as a cofactor. Requires (6R)-5,10-methylene-5,6,7,8-tetrahydrofolate as cofactor.

Its subcellular location is the plastid. It localises to the chloroplast. The protein resides in the mitochondrion. Functionally, may have a photoreceptor function. Binds ss- and ds-DNA in a sequence non-specific manner. Has a photolyase activity specific for cyclobutane pyrimidine dimers in ssDNA. The protein is Cryptochrome DASH, chloroplastic/mitochondrial (CRYD) of Arabidopsis thaliana (Mouse-ear cress).